The following is a 368-amino-acid chain: GTPase Obg (368 aa).

The 159-residue stretch at 1-159 (MQFIDQAEIE…RQLRLELKLL (159 aa)) folds into the Obg domain. In terms of domain architecture, OBG-type G spans 160–328 (AEVGIIGLPN…LMQLVWQWLD (169 aa)). Residues 166–173 (GLPNAGKS), 191–195 (FTTLV), 213–216 (DIPG), 280–283 (NKID), and 309–311 (SAA) contribute to the GTP site. The Mg(2+) site is built by S173 and T193.

The protein belongs to the TRAFAC class OBG-HflX-like GTPase superfamily. OBG GTPase family. Monomer. The cofactor is Mg(2+).

It is found in the cytoplasm. An essential GTPase which binds GTP, GDP and possibly (p)ppGpp with moderate affinity, with high nucleotide exchange rates and a fairly low GTP hydrolysis rate. Plays a role in control of the cell cycle, stress response, ribosome biogenesis and in those bacteria that undergo differentiation, in morphogenesis control. The protein is GTPase Obg of Synechocystis sp. (strain ATCC 27184 / PCC 6803 / Kazusa).